A 334-amino-acid polypeptide reads, in one-letter code: Probable fructose-bisphosphate aldolase class 1 (334 aa).

The protein belongs to the class I fructose-bisphosphate aldolase family.

It catalyses the reaction beta-D-fructose 1,6-bisphosphate = D-glyceraldehyde 3-phosphate + dihydroxyacetone phosphate. It participates in carbohydrate degradation; glycolysis; D-glyceraldehyde 3-phosphate and glycerone phosphate from D-glucose: step 4/4. The polypeptide is Probable fructose-bisphosphate aldolase class 1 (Xylella fastidiosa (strain 9a5c)).